The primary structure comprises 91 residues: Probable Fe(2+)-trafficking protein (91 aa).

The protein belongs to the Fe(2+)-trafficking protein family.

Could be a mediator in iron transactions between iron acquisition and iron-requiring processes, such as synthesis and/or repair of Fe-S clusters in biosynthetic enzymes. In Ralstonia pickettii (strain 12J), this protein is Probable Fe(2+)-trafficking protein.